A 264-amino-acid polypeptide reads, in one-letter code: Methionine aminopeptidase (264 aa).

His79 provides a ligand contact to substrate. A divalent metal cation-binding residues include Asp97, Asp108, and His171. His178 contacts substrate. Residues Glu204 and Glu235 each contribute to the a divalent metal cation site.

The protein belongs to the peptidase M24A family. Methionine aminopeptidase type 1 subfamily. Monomer. The cofactor is Co(2+). Zn(2+) is required as a cofactor. Requires Mn(2+) as cofactor. It depends on Fe(2+) as a cofactor.

The catalysed reaction is Release of N-terminal amino acids, preferentially methionine, from peptides and arylamides.. Functionally, removes the N-terminal methionine from nascent proteins. The N-terminal methionine is often cleaved when the second residue in the primary sequence is small and uncharged (Met-Ala-, Cys, Gly, Pro, Ser, Thr, or Val). Requires deformylation of the N(alpha)-formylated initiator methionine before it can be hydrolyzed. The sequence is that of Methionine aminopeptidase from Buchnera aphidicola subsp. Acyrthosiphon pisum (strain APS) (Acyrthosiphon pisum symbiotic bacterium).